A 361-amino-acid polypeptide reads, in one-letter code: Adenosine kinase (361 aa).

Positions 7 to 15 (PKPKKLKVE) match the Nuclear localization signal motif. An adenosine-binding site is contributed by Asp34. Ser48 contributes to the Mg(2+) binding site. Phosphotyrosine is present on Tyr76. Residues Asp146 and Asn147 each contribute to the Mg(2+) site. Gln305 contributes to the adenosine binding site. Residue Asp316 is part of the active site. The active-site Proton acceptor is Asp316.

Belongs to the carbohydrate kinase PfkB family. Monomer. The cofactor is Mg(2+). Post-translationally, the N-terminus is blocked.

It localises to the nucleus. The catalysed reaction is adenosine + ATP = AMP + ADP + H(+). The protein operates within purine metabolism; AMP biosynthesis via salvage pathway; AMP from adenosine: step 1/1. With respect to regulation, activity is inhibited by 5-iodotubercidin and 5'-amino-5'-deoxyadenosine. Catalyzes the phosphorylation of the purine nucleoside adenosine at the 5' position in an ATP-dependent manner. Serves as a potential regulator of concentrations of extracellular adenosine and intracellular adenine nucleotides. In Cricetulus griseus (Chinese hamster), this protein is Adenosine kinase (ADK).